Consider the following 392-residue polypeptide: 5-amino-6-(D-ribitylamino)uracil--L-tyrosine 4-hydroxyphenyl transferase (392 aa).

In terms of domain architecture, Radical SAM core spans 60–307 (VTYVVNRNIN…MAIARLYLGK (248 aa)). [4Fe-4S] cluster-binding residues include Cys74, Cys78, and Cys81.

The protein belongs to the radical SAM superfamily. CofH family. As to quaternary structure, consists of two subunits, CofG and CofH. The cofactor is [4Fe-4S] cluster.

It carries out the reaction 5-amino-6-(D-ribitylamino)uracil + L-tyrosine + S-adenosyl-L-methionine = 5-amino-5-(4-hydroxybenzyl)-6-(D-ribitylimino)-5,6-dihydrouracil + 2-iminoacetate + 5'-deoxyadenosine + L-methionine + H(+). Its pathway is cofactor biosynthesis; coenzyme F0 biosynthesis. In terms of biological role, catalyzes the radical-mediated synthesis of 5-amino-5-(4-hydroxybenzyl)-6-(D-ribitylimino)-5,6-dihydrouracil from 5-amino-6-(D-ribitylamino)uracil and L-tyrosine. This Synechocystis sp. (strain ATCC 27184 / PCC 6803 / Kazusa) protein is 5-amino-6-(D-ribitylamino)uracil--L-tyrosine 4-hydroxyphenyl transferase.